Reading from the N-terminus, the 214-residue chain is ATP phosphoribosyltransferase (214 aa).

This sequence belongs to the ATP phosphoribosyltransferase family. Short subfamily. Heteromultimer composed of HisG and HisZ subunits.

Its subcellular location is the cytoplasm. It carries out the reaction 1-(5-phospho-beta-D-ribosyl)-ATP + diphosphate = 5-phospho-alpha-D-ribose 1-diphosphate + ATP. It participates in amino-acid biosynthesis; L-histidine biosynthesis; L-histidine from 5-phospho-alpha-D-ribose 1-diphosphate: step 1/9. Catalyzes the condensation of ATP and 5-phosphoribose 1-diphosphate to form N'-(5'-phosphoribosyl)-ATP (PR-ATP). Has a crucial role in the pathway because the rate of histidine biosynthesis seems to be controlled primarily by regulation of HisG enzymatic activity. This chain is ATP phosphoribosyltransferase, found in Lysinibacillus sphaericus (strain C3-41).